A 227-amino-acid chain; its full sequence is 7-cyano-7-deazaguanine synthase (227 aa).

Valine 11 to leucine 21 contacts ATP. Residues cysteine 192, cysteine 200, cysteine 203, and cysteine 206 each contribute to the Zn(2+) site.

This sequence belongs to the QueC family. The cofactor is Zn(2+).

The catalysed reaction is 7-carboxy-7-deazaguanine + NH4(+) + ATP = 7-cyano-7-deazaguanine + ADP + phosphate + H2O + H(+). It participates in purine metabolism; 7-cyano-7-deazaguanine biosynthesis. Its function is as follows. Catalyzes the ATP-dependent conversion of 7-carboxy-7-deazaguanine (CDG) to 7-cyano-7-deazaguanine (preQ(0)). This chain is 7-cyano-7-deazaguanine synthase, found in Persephonella marina (strain DSM 14350 / EX-H1).